Consider the following 166-residue polypeptide: Large ribosomal subunit protein uL10 (166 aa).

This sequence belongs to the universal ribosomal protein uL10 family. Part of the ribosomal stalk of the 50S ribosomal subunit. The N-terminus interacts with L11 and the large rRNA to form the base of the stalk. The C-terminus forms an elongated spine to which L12 dimers bind in a sequential fashion forming a multimeric L10(L12)X complex.

In terms of biological role, forms part of the ribosomal stalk, playing a central role in the interaction of the ribosome with GTP-bound translation factors. In Pseudomonas putida (strain GB-1), this protein is Large ribosomal subunit protein uL10.